We begin with the raw amino-acid sequence, 758 residues long: 5-methyltetrahydropteroyltriglutamate--homocysteine methyltransferase (758 aa).

5-methyltetrahydropteroyltri-L-glutamate is bound by residues 16–19 (RELK) and Lys112. L-homocysteine-binding positions include 433 to 435 (IGS) and Glu486. Residues 433-435 (IGS) and Glu486 each bind L-methionine. Residues 517–518 (RC) and Trp563 contribute to the 5-methyltetrahydropteroyltri-L-glutamate site. Residue Asp601 coordinates L-homocysteine. Residue Asp601 coordinates L-methionine. Residue Glu607 participates in 5-methyltetrahydropteroyltri-L-glutamate binding. Zn(2+) contacts are provided by His643, Cys645, and Glu667. The active-site Proton donor is the His696. Cys728 is a Zn(2+) binding site.

It belongs to the vitamin-B12 independent methionine synthase family. Requires Zn(2+) as cofactor.

The enzyme catalyses 5-methyltetrahydropteroyltri-L-glutamate + L-homocysteine = tetrahydropteroyltri-L-glutamate + L-methionine. Its pathway is amino-acid biosynthesis; L-methionine biosynthesis via de novo pathway; L-methionine from L-homocysteine (MetE route): step 1/1. In terms of biological role, catalyzes the transfer of a methyl group from 5-methyltetrahydrofolate to homocysteine resulting in methionine formation. The chain is 5-methyltetrahydropteroyltriglutamate--homocysteine methyltransferase from Neisseria gonorrhoeae (strain ATCC 700825 / FA 1090).